A 782-amino-acid chain; its full sequence is Cadherin-5 (782 aa).

An N-terminal signal peptide occupies residues 1–22 (MQVLVMLLAAAGTYLGLLTAPT). The propeptide occupies 23–44 (AASNPGRQDTPSTLPLHRRQKR). Cadherin domains are found at residues 45–148 (DWIW…WPVF), 149–255 (TQLV…FPVF), 256–370 (TQTR…PPNF), 371–475 (KQPF…DNAP), and 476–592 (EFAK…MGAQ). The Extracellular segment spans residues 45–598 (DWIWNQMHID…MGAQVGVSIQ (554 aa)). Residues Glu55 and Glu56 each contribute to the Ca(2+) site. The N-linked (GlcNAc...) asparagine glycan is linked to Asn58. Residues Asp106, Glu108, Asp140, Ile141, Asn142, Asp143, and Asn144 each contribute to the Ca(2+) site. Residue Asn154 is glycosylated (N-linked (GlcNAc...) asparagine). 4 residues coordinate Ca(2+): Asp174, Asp176, His183, and Asp228. N-linked (GlcNAc...) asparagine glycosylation is found at Asn360, Asn440, Asn522, and Asn534. A helical membrane pass occupies residues 599–619 (ALVAIFLCILTIAVISLLVYL). Positions 620–659 (RRRLRKQARAHGKSVPEIHEQLVTYDEEGGGEMDTTSYDV) are required for interaction with PALS1. The Cytoplasmic portion of the chain corresponds to 620 to 782 (RRRLRKQARA…GSDPREELLY (163 aa)).

Part of a complex composed of AMOTL2, MAGI1 and CDH5, within the complex AMOTL2 acts as a scaffold protein for the interaction of MAGI1 with CDH5. The complex is required for coupling actin fibers to cell junctions in endothelial cells. Within the complex AMOTL2 (via its N-terminus) interacts with CDH5. Interacts (via cadherin 5 domain) with PTPRB. Interacts with TRPC4. Interacts with KRIT1. Interacts with PARD3. Interacts with RTN4 (isoform B). Interacts with PALS1; the interaction promotes PALS1 localization to cell junctions and is required for CDH5-mediated vascular lumen formation and endothelial cell. Interacts with CTNND1/p120-catenin; the interaction controls CADH5 endocytosis. In terms of processing, phosphorylated on tyrosine residues by KDR/VEGFR-2. Dephosphorylated by PTPRB. Post-translationally, O-glycosylated.

It localises to the cell junction. The protein localises to the adherens junction. It is found in the cell membrane. The protein resides in the cytoplasm. Cadherins are calcium-dependent cell adhesion proteins. They preferentially interact with themselves in a homophilic manner in connecting cells; cadherins may thus contribute to the sorting of heterogeneous cell types. This cadherin may play a important role in endothelial cell biology through control of the cohesion and organization of the intercellular junctions. It associates with alpha-catenin forming a link to the cytoskeleton. Plays a role in coupling actin fibers to cell junctions in endothelial cells, via acting as a cell junctional complex anchor for AMOTL2 and MAGI1. Acts in concert with KRIT1 and PALS1 to establish and maintain correct endothelial cell polarity and vascular lumen. These effects are mediated by recruitment and activation of the Par polarity complex and RAP1B. Required for activation of PRKCZ and for localization of phosphorylated PRKCZ, PARD3, TIAM1 and RAP1B to the cell junction. Associates with CTNND1/p120-catenin to control CADH5 endocytosis. This Sus scrofa (Pig) protein is Cadherin-5.